The sequence spans 344 residues: Glycerol-3-phosphate dehydrogenase [NAD(P)+] (344 aa).

NADPH contacts are provided by serine 23, tryptophan 24, arginine 44, and lysine 118. Residues lysine 118, glycine 147, and threonine 149 each contribute to the sn-glycerol 3-phosphate site. NADPH is bound at residue alanine 151. Sn-glycerol 3-phosphate is bound by residues lysine 202, aspartate 255, serine 265, arginine 266, and asparagine 267. Lysine 202 functions as the Proton acceptor in the catalytic mechanism. Residue arginine 266 participates in NADPH binding. Glutamate 292 is a binding site for NADPH.

It belongs to the NAD-dependent glycerol-3-phosphate dehydrogenase family.

It is found in the cytoplasm. The catalysed reaction is sn-glycerol 3-phosphate + NAD(+) = dihydroxyacetone phosphate + NADH + H(+). The enzyme catalyses sn-glycerol 3-phosphate + NADP(+) = dihydroxyacetone phosphate + NADPH + H(+). It functions in the pathway membrane lipid metabolism; glycerophospholipid metabolism. Catalyzes the reduction of the glycolytic intermediate dihydroxyacetone phosphate (DHAP) to sn-glycerol 3-phosphate (G3P), the key precursor for phospholipid synthesis. This is Glycerol-3-phosphate dehydrogenase [NAD(P)+] from Nitrosococcus oceani (strain ATCC 19707 / BCRC 17464 / JCM 30415 / NCIMB 11848 / C-107).